The sequence spans 466 residues: Integrator complex subunit 12 (466 aa).

The tract at residues 41–101 (KGNDSVYRPQ…EAEKRSADKM (61 aa)) is disordered. Positions 69-84 (KASSSTPSSSMLSKPL) are enriched in low complexity. A compositionally biased stretch (basic and acidic residues) spans 85 to 101 (TSEKLKKEAEKRSADKM). Residues 156–212 (GLACVVCRQMTVFSGNQLVECQECHNLYHQDCHKPQVTDKDVNDPRLVWYCARCTRQ) form a PHD-type zinc finger. 2 disordered regions span residues 216–251 (MAQK…ELKA) and 311–466 (GTSS…KLKK). 2 stretches are compositionally biased toward polar residues: residues 218–233 (QKNQ…SAVS) and 311–329 (GTSS…SVQK). Positions 338–373 (PSKPGSVSKSGSGGSSSSSTIPIKPLPPLILGKTGL) are enriched in low complexity. A compositionally biased stretch (polar residues) spans 374–386 (SRSMSSDNVSKTG). Residues 392–423 (PSSAGSVSSLSSQLGSNNGSSSAAGSNVTSSN) are compositionally biased toward low complexity. Basic residues predominate over residues 453–466 (QMVKKKAAQKKLKK).

The protein belongs to the Integrator subunit 12 family. In terms of assembly, component of the Integrator complex, composed of core subunits INTS1, INTS2, INTS3, INTS4, INTS5, INTS6, INTS7, INTS8, INTS9/RC74, INTS10, INTS11/CPSF3L, INTS12, INTS13, INTS14 and INTS15. The core complex associates with protein phosphatase 2A subunits PPP2CA and PPP2R1A, to form the Integrator-PP2A (INTAC) complex.

It localises to the nucleus. Functionally, component of the integrator complex, a multiprotein complex that terminates RNA polymerase II (Pol II) transcription in the promoter-proximal region of genes. The integrator complex provides a quality checkpoint during transcription elongation by driving premature transcription termination of transcripts that are unfavorably configured for transcriptional elongation: the complex terminates transcription by (1) catalyzing dephosphorylation of the C-terminal domain (CTD) of Pol II subunit POLR2A/RPB1 and SUPT5H/SPT5, (2) degrading the exiting nascent RNA transcript via endonuclease activity and (3) promoting the release of Pol II from bound DNA. The integrator complex is also involved in terminating the synthesis of non-coding Pol II transcripts, such as enhancer RNAs (eRNAs), small nuclear RNAs (snRNAs), telomerase RNAs and long non-coding RNAs (lncRNAs). This chain is Integrator complex subunit 12 (ints12), found in Xenopus tropicalis (Western clawed frog).